Consider the following 271-residue polypeptide: Calretinin (271 aa).

EF-hand domains lie at 16 to 51, 63 to 98, 107 to 142, 151 to 186, 195 to 230, and 235 to 270; these read LTASQFLEIWKHFDADGNGYIEGKELENFFQELEKA, NFGEKMKEFMQKYDKNSDGKIEMAELAQILPTEENF, GSSAEFMEAWRKYDTDRSGYIEANELKGFLSDLLKK, KLQEYTQTILRMFDLNGDGKLGLSEMSRLLPVQENF, LTSEEFNAIFTFYDKDRSGYIDEHELDALLKDLYEK, and MNIQQLTNYRKSVMSLAEAGKLYRKDLEIVLCSEPP. Ca(2+) is bound by residues aspartate 29, aspartate 31, asparagine 33, tyrosine 35, glutamate 40, aspartate 76, asparagine 78, aspartate 80, lysine 82, glutamate 87, aspartate 120, aspartate 122, serine 124, tyrosine 126, glutamate 131, aspartate 164, asparagine 166, aspartate 168, lysine 170, glutamate 175, aspartate 208, aspartate 210, serine 212, tyrosine 214, and glutamate 219. Tyrosine 214 carries the post-translational modification Phosphotyrosine.

This sequence belongs to the calbindin family. Brain.

The protein localises to the synapse. It is found in the cell projection. The protein resides in the dendrite. In terms of biological role, calcium-binding protein involved in calcium homeostasis and signal transduction. It plays a critical role in buffering intracellular calcium levels and modulating calcium-dependent signaling pathways. Predominantly expressed in specific neuronal populations, influences synaptic plasticity and neuronal excitability, contributing to learning and memory. During embryonic development, it facilitates neuronal differentiation and maturation. The protein is Calretinin of Homo sapiens (Human).